A 331-amino-acid chain; its full sequence is Centriolar satellite-associated tubulin polyglutamylase complex regulator 1 (331 aa).

Residues 283–331 (PTSNNNSSSSALGQKEMSKKASPRKSLHQRKRIEMESDGSTEETDSSEN) are disordered. Over residues 303–313 (ASPRKSLHQRK) the composition is skewed to basic residues. The segment covering 318–331 (ESDGSTEETDSSEN) has biased composition (acidic residues).

It belongs to the CSTPP1 family. In terms of assembly, interacts with PCM1. Interacts with the complex TPGC. Binds to alpha-tubulin. Expression in elevated in ciliated tissues/organs, including brain, spinal cord, kidney, eyes, ears and lateral line.

The protein localises to the cytoplasm. Its subcellular location is the cytoskeleton. The protein resides in the microtubule organizing center. It is found in the centrosome. It localises to the centriolar satellite. Functionally, regulator of the tubulin polyglutamylase complex (TPGC) that controls cytoskeletal organization, nuclear shape, and cilium disassembly by balancing microtubule and actin assembly. Regulates the assembly and stability of the TPGC and thereby modulates polyglutamylation of the microtubule, which antagonizes MAP4 binding. The chain is Centriolar satellite-associated tubulin polyglutamylase complex regulator 1 (cstpp1) from Danio rerio (Zebrafish).